We begin with the raw amino-acid sequence, 197 residues long: Endo-1,4-beta-xylanase A (197 aa).

In terms of domain architecture, GH11 spans 1–197 (SGTPSSTGTD…SSGTATITVT (197 aa)). The Nucleophile role is filled by E87. A disulfide bridge links C111 with C160. Catalysis depends on E184, which acts as the Proton donor.

This sequence belongs to the glycosyl hydrolase 11 (cellulase G) family.

The protein resides in the secreted. It catalyses the reaction Endohydrolysis of (1-&gt;4)-beta-D-xylosidic linkages in xylans.. It participates in glycan degradation; xylan degradation. Hydrolyzes xylans into xylobiose and xylose. This Schizophyllum commune (Split gill fungus) protein is Endo-1,4-beta-xylanase A (XYNA).